Consider the following 127-residue polypeptide: Ribosome-binding factor A (127 aa).

This sequence belongs to the RbfA family. In terms of assembly, monomer. Binds 30S ribosomal subunits, but not 50S ribosomal subunits or 70S ribosomes.

Its subcellular location is the cytoplasm. Its function is as follows. One of several proteins that assist in the late maturation steps of the functional core of the 30S ribosomal subunit. Associates with free 30S ribosomal subunits (but not with 30S subunits that are part of 70S ribosomes or polysomes). Required for efficient processing of 16S rRNA. May interact with the 5'-terminal helix region of 16S rRNA. This Aromatoleum aromaticum (strain DSM 19018 / LMG 30748 / EbN1) (Azoarcus sp. (strain EbN1)) protein is Ribosome-binding factor A.